A 429-amino-acid chain; its full sequence is Enolase (429 aa).

Gln-163 contacts (2R)-2-phosphoglycerate. The Proton donor role is filled by Glu-205. Positions 242, 287, and 314 each coordinate Mg(2+). (2R)-2-phosphoglycerate is bound by residues Lys-339, Arg-368, Ser-369, and Lys-390. Catalysis depends on Lys-339, which acts as the Proton acceptor.

The protein belongs to the enolase family. It depends on Mg(2+) as a cofactor.

It is found in the cytoplasm. It localises to the secreted. The protein localises to the cell surface. It carries out the reaction (2R)-2-phosphoglycerate = phosphoenolpyruvate + H2O. It functions in the pathway carbohydrate degradation; glycolysis; pyruvate from D-glyceraldehyde 3-phosphate: step 4/5. Its function is as follows. Catalyzes the reversible conversion of 2-phosphoglycerate (2-PG) into phosphoenolpyruvate (PEP). It is essential for the degradation of carbohydrates via glycolysis. The sequence is that of Enolase from Salinibacter ruber (strain DSM 13855 / M31).